A 349-amino-acid chain; its full sequence is Macrophage-capping protein (349 aa).

Met1 is modified (N-acetylmethionine). 3 Gelsolin-like repeats span residues 28 to 107 (KLKP…DLFM), 147 to 222 (KNIR…AEMI), and 264 to 342 (LTKV…PIFK). The Nuclear localization signal motif lies at 138-147 (RKLYQVKGKK). Position 338 is a phosphoserine (Ser338).

It belongs to the villin/gelsolin family. Interacts with NUP62. Interacts with NUTF2 and RAN; involved in CAPG nuclear import. In terms of processing, phosphorylated.

The protein localises to the nucleus. It is found in the cytoplasm. Its subcellular location is the melanosome. It localises to the cell projection. The protein resides in the lamellipodium. The protein localises to the ruffle. Functionally, calcium-sensitive protein which reversibly blocks the barbed ends of actin filaments but does not sever preformed actin filaments. May play an important role in macrophage function. May play a role in regulating cytoplasmic and/or nuclear structures through potential interactions with actin. May bind DNA. Uncapping occurs either when Ca(2+) falls or when the concentration of polyphosphoinositide rises, both at low and high Ca(2+). This Rattus norvegicus (Rat) protein is Macrophage-capping protein (Capg).